The primary structure comprises 445 residues: Lipid A 1-phosphatase (445 aa).

The signal sequence occupies residues 1-22 (MNRESFLLLLVLLFALPLHLQA).

Its subcellular location is the periplasm. Its pathway is bacterial outer membrane biogenesis; LPS lipid A biosynthesis. Removes the 1-phosphate group from lipid A species. Absence of phosphate groups in lipid A renders the bacteria resistant to host-derived cationic antimicrobial peptides (CAMP) and allowing it to camouflage itself from the host innate immune response. This Porphyromonas gingivalis (strain ATCC 33277 / DSM 20709 / CIP 103683 / JCM 12257 / NCTC 11834 / 2561) protein is Lipid A 1-phosphatase.